The sequence spans 922 residues: Lysine-specific demethylase 7A (922 aa).

Residues 6 to 57 (PVYCVCRQPYDVSRFMIECDICKDWFHSSCVKVEEHQAADIDLYHCPNCEVL) form a PHD-type zinc finger. Residues 199-355 (FSDTKMADLV…MQLRCYEMEK (157 aa)) form the JmjC domain. Thr-248 provides a ligand contact to substrate. His-251 and Asp-253 together coordinate Fe cation. Lys-268 serves as a coordination point for substrate. His-323 is a binding site for Fe cation. Disordered regions lie at residues 445–490 (EEEG…TKTP), 565–607 (RSLY…TQKP), 622–711 (GSSE…EQEA), 754–773 (GKEH…HHVK), and 872–902 (LHPT…MATA). A compositionally biased stretch (basic residues) spans 473 to 483 (HHSGRKARRLR). Residues 648–666 (ESESSGDDDDEEEEEEEER) are compositionally biased toward acidic residues. Composition is skewed to basic and acidic residues over residues 667 to 683 (QEPI…RRLP) and 691 to 701 (PDHDSPQKREC).

It belongs to the JHDM1 histone demethylase family. JHDM1D subfamily. It depends on Fe(2+) as a cofactor.

Its subcellular location is the nucleus. In terms of biological role, histone demethylase required for brain development. Specifically demethylates dimethylated 'Lys-9' and 'Lys-27' (H3K9me2 and H3K27me2, respectively) of histone H3 and monomethylated histone H4 'Lys-20' residue (H4K20Me1), thereby playing a central role in histone code. This Xenopus tropicalis (Western clawed frog) protein is Lysine-specific demethylase 7A (kdm7a).